The primary structure comprises 222 residues: Probable pyridoxal 5'-phosphate synthase subunit SNO2 (222 aa).

58 to 60 (GES) provides a ligand contact to L-glutamine. Catalysis depends on Cys91, which acts as the Nucleophile. L-glutamine is bound by residues Arg120 and 151 to 152 (IR). Residues His197 and Glu199 each act as charge relay system in the active site.

The protein belongs to the glutaminase PdxT/SNO family.

The catalysed reaction is aldehydo-D-ribose 5-phosphate + D-glyceraldehyde 3-phosphate + L-glutamine = pyridoxal 5'-phosphate + L-glutamate + phosphate + 3 H2O + H(+). It catalyses the reaction L-glutamine + H2O = L-glutamate + NH4(+). Its pathway is cofactor biosynthesis; pyridoxal 5'-phosphate biosynthesis. Catalyzes the hydrolysis of glutamine to glutamate and ammonia as part of the biosynthesis of pyridoxal 5'-phosphate. The resulting ammonia molecule is channeled to the active site of a SNZ isoform. This is Probable pyridoxal 5'-phosphate synthase subunit SNO2 (SNO2) from Saccharomyces cerevisiae (strain ATCC 204508 / S288c) (Baker's yeast).